Reading from the N-terminus, the 226-residue chain is NEDD8-specific protease 1 (226 aa).

Belongs to the peptidase C48 family.

Processes the pre-form of the ubiquitin-like protein NEDD8/RUB1. Has the capacity to discriminate between NEDD8/RUB1 and ubiquitin. Has no SUMO protease activity. The protein is NEDD8-specific protease 1 (NEDP1) of Arabidopsis thaliana (Mouse-ear cress).